A 72-amino-acid chain; its full sequence is Translation initiation factor IF-1 (72 aa).

In terms of domain architecture, S1-like spans Met-1 to Lys-72.

Belongs to the IF-1 family. As to quaternary structure, component of the 30S ribosomal translation pre-initiation complex which assembles on the 30S ribosome in the order IF-2 and IF-3, IF-1 and N-formylmethionyl-tRNA(fMet); mRNA recruitment can occur at any time during PIC assembly.

It is found in the cytoplasm. Functionally, one of the essential components for the initiation of protein synthesis. Stabilizes the binding of IF-2 and IF-3 on the 30S subunit to which N-formylmethionyl-tRNA(fMet) subsequently binds. Helps modulate mRNA selection, yielding the 30S pre-initiation complex (PIC). Upon addition of the 50S ribosomal subunit IF-1, IF-2 and IF-3 are released leaving the mature 70S translation initiation complex. This Nitrosomonas eutropha (strain DSM 101675 / C91 / Nm57) protein is Translation initiation factor IF-1.